Here is a 206-residue protein sequence, read N- to C-terminus: Ribosomal RNA large subunit methyltransferase E (206 aa).

5 residues coordinate S-adenosyl-L-methionine: Gly-60, Trp-62, Asp-80, Asn-96, and Asp-121. The active-site Proton acceptor is Lys-161.

This sequence belongs to the class I-like SAM-binding methyltransferase superfamily. RNA methyltransferase RlmE family.

It localises to the cytoplasm. It catalyses the reaction uridine(2552) in 23S rRNA + S-adenosyl-L-methionine = 2'-O-methyluridine(2552) in 23S rRNA + S-adenosyl-L-homocysteine + H(+). Its function is as follows. Specifically methylates the uridine in position 2552 of 23S rRNA at the 2'-O position of the ribose in the fully assembled 50S ribosomal subunit. This Francisella philomiragia subsp. philomiragia (strain ATCC 25017 / CCUG 19701 / FSC 153 / O#319-036) protein is Ribosomal RNA large subunit methyltransferase E.